A 528-amino-acid chain; its full sequence is GMP synthase [glutamine-hydrolyzing] (528 aa).

Residues 22-212 (AILVLDFGSQ…VFKICQSQTN (191 aa)) enclose the Glutamine amidotransferase type-1 domain. Cys99 acts as the Nucleophile in catalysis. Catalysis depends on residues His186 and Glu188. The GMPS ATP-PPase domain maps to 213–403 (WSLESNVETI…LGIKKEALYR (191 aa)). An ATP-binding site is contributed by 240-246 (SGGTDSL).

Homodimer.

The catalysed reaction is XMP + L-glutamine + ATP + H2O = GMP + L-glutamate + AMP + diphosphate + 2 H(+). It functions in the pathway purine metabolism; GMP biosynthesis; GMP from XMP (L-Gln route): step 1/1. Its function is as follows. Catalyzes the synthesis of GMP from XMP. This chain is GMP synthase [glutamine-hydrolyzing], found in Borrelia garinii subsp. bavariensis (strain ATCC BAA-2496 / DSM 23469 / PBi) (Borreliella bavariensis).